The following is a 273-amino-acid chain: Cell division cycle-associated protein 3 (273 aa).

Disordered regions lie at residues 1–231 (MGST…ALSE) and 251–273 (GGGAWEQNEDHDKENQHFALMES). Ser29 and Ser31 each carry phosphoserine. The span at 32 to 45 (AGIQRTPIQVESSP) shows a compositional bias: polar residues. Phosphothreonine is present on Thr37. Phosphoserine is present on residues Ser44 and Ser67. The residue at position 75 (Thr75) is a Phosphothreonine. An F-box-like region spans residues 90 to 124 (KELSEVFETEVSETEVSESISSPVLGLPQETPLSS). Ser93 is modified (phosphoserine). The segment covering 94–105 (EVFETEVSETEV) has biased composition (acidic residues). Polar residues-rich tracts occupy residues 144–154 (PWSQTELNSKQ) and 164–175 (STETMVSGQTSD). Ser204 bears the Phosphoserine mark. A Phosphothreonine modification is found at Thr207. Residues 210-220 (QDDNSPGTLTL) show a composition bias toward polar residues. The residue at position 214 (Ser214) is a Phosphoserine. Position 217 is a phosphothreonine (Thr217). The KEN box signature appears at 263-265 (KEN).

As to quaternary structure, interacts with SKP1. Part of a SCF (SKP1-cullin-F-box) protein ligase complex. In terms of processing, ubiquitinated and degraded by the APC/C-Cdh1 complex.

It localises to the cytoplasm. The protein localises to the cytosol. Its pathway is protein modification; protein ubiquitination. Its function is as follows. F-box-like protein which is required for entry into mitosis. Acts by participating in E3 ligase complexes that mediate the ubiquitination and degradation of WEE1 kinase at G2/M phase. This is Cell division cycle-associated protein 3 (Cdca3) from Rattus norvegicus (Rat).